A 115-amino-acid chain; its full sequence is Con-Ins G1b (115 aa).

Positions 1 to 24 (MTTSFYFLLMALGLLLYVCQSSFG) are cleaved as a signal peptide. A propeptide spanning residues 25 to 29 (NQHTR) is cleaved from the precursor. Residue Pro34 is modified to 4-hydroxyproline; partial. 3 disulfides stabilise this stretch: Cys38/Cys101, Cys50/Cys114, and Cys100/Cys105. Glu41 carries the 4-carboxyglutamate modification. A propeptide spans 52 to 94 (RKRNDAGEKRGRASPLWQRRGFLSKLKARAKRNGAFHLPRDGR) (c peptide). A 4-carboxyglutamate modification is found at Glu98. A 4-hydroxyproline; partial modification is found at Pro104. Glu109 is subject to 4-carboxyglutamate; partial. Cys114 carries the post-translational modification Cysteine amide.

The protein belongs to the insulin family. In terms of assembly, heterodimer of A and B chains; disulfide-linked. As to expression, expressed by the venom gland.

It localises to the secreted. This venom insulin, from a fish-hunting cone snail, facilitates prey capture by rapidly inducing hypoglycemic shock. It is one of the smallest known insulin found in nature and lacks the C-terminal segment of the B chain that, in human insulin, mediates engagement of the insulin receptor (INSR) and assembly of the hormone's hexameric storage form. Despite lacking this segment, it both binds and activates human insulin receptor (long isoform (HIR-B) of INSR) with only a 10-fold lower potency. In vivo, intraperitoneal injection of this peptide into zebrafish lowers blood glucose with the same potency than human insulin. In addition, when applied to water, this peptide reduces overall locomotor activity of zebrafish larvae, observed as a significant decrease in the percentage of time spent swimming and movement frequency. This chain is Con-Ins G1b, found in Conus geographus (Geography cone).